Reading from the N-terminus, the 134-residue chain is MNRNMWIVLSCVLYMIYICNGRDVLLYPPHKKTNKVIVKCNGYTNSTYSILYWMVGNNNTFVEQLNSDHYKEKKYNSTEKNEHMYKLRTDLIIYNITSEMEMTKLTCVLSDIYTPIKASIILNNLWSCLNTTQV.

This is an uncharacterized protein from Swinepox virus (strain Kasza) (SWPV).